The chain runs to 382 residues: Anhydro-N-acetylmuramic acid kinase (382 aa).

9 to 16 (GTSLDGID) lines the ATP pocket.

Belongs to the anhydro-N-acetylmuramic acid kinase family.

It catalyses the reaction 1,6-anhydro-N-acetyl-beta-muramate + ATP + H2O = N-acetyl-D-muramate 6-phosphate + ADP + H(+). Its pathway is amino-sugar metabolism; 1,6-anhydro-N-acetylmuramate degradation. It participates in cell wall biogenesis; peptidoglycan recycling. In terms of biological role, catalyzes the specific phosphorylation of 1,6-anhydro-N-acetylmuramic acid (anhMurNAc) with the simultaneous cleavage of the 1,6-anhydro ring, generating MurNAc-6-P. Is required for the utilization of anhMurNAc either imported from the medium or derived from its own cell wall murein, and thus plays a role in cell wall recycling. The sequence is that of Anhydro-N-acetylmuramic acid kinase from Bacillus cereus (strain ZK / E33L).